The chain runs to 125 residues: Fluoride-specific ion channel FluC (125 aa).

4 consecutive transmembrane segments (helical) span residues Pro4 to Val24, Gly36 to Ala56, Leu68 to Val88, and Val100 to Leu120. 2 residues coordinate Na(+): Gly75 and Thr78.

It belongs to the fluoride channel Fluc/FEX (TC 1.A.43) family.

It is found in the cell inner membrane. The catalysed reaction is fluoride(in) = fluoride(out). Its activity is regulated as follows. Na(+) is not transported, but it plays an essential structural role and its presence is essential for fluoride channel function. Functionally, fluoride-specific ion channel. Important for reducing fluoride concentration in the cell, thus reducing its toxicity. This Erwinia tasmaniensis (strain DSM 17950 / CFBP 7177 / CIP 109463 / NCPPB 4357 / Et1/99) protein is Fluoride-specific ion channel FluC.